The sequence spans 315 residues: tRNA pseudouridine synthase B (315 aa).

A substrate-binding site is contributed by His-42. The Nucleophile role is filled by Asp-47. Residues Tyr-75, Tyr-178, and Leu-199 each coordinate substrate.

It belongs to the pseudouridine synthase TruB family. Type 1 subfamily.

The enzyme catalyses uridine(55) in tRNA = pseudouridine(55) in tRNA. In terms of biological role, responsible for synthesis of pseudouridine from uracil-55 in the psi GC loop of transfer RNAs. This Photorhabdus laumondii subsp. laumondii (strain DSM 15139 / CIP 105565 / TT01) (Photorhabdus luminescens subsp. laumondii) protein is tRNA pseudouridine synthase B.